The following is a 168-amino-acid chain: Iron-sulfur cluster assembly enzyme ISCU (168 aa).

Residues 1-35 (MAAATGAGRLRRAASALLLRSPRLPARELSAPARL) constitute a mitochondrion transit peptide. S15 carries the post-translational modification Phosphoserine. The Cysteine persulfide intermediate role is filled by C70. C70 is modified (cysteine persulfide). Residues D72, C96, and C139 each contribute to the Zn(2+) site. C139 functions as the Cysteine persulfide intermediate in the catalytic mechanism. Residue C139 is modified to Cysteine persulfide.

It belongs to the NifU family. Homodimer; Tyr-36-mediated dimerization of two iron- and sulfide-containing ISCU subunit bind to the cysteine desulfurase complex. Component of the mitochondrial core iron-sulfur cluster (ISC) complex composed of NFS1, LYRM4, NDUFAB1, ISCU, FXN, and FDX2; this complex is a heterohexamer containing two copies of each monomer. Interacts (D-state) with NFS1 (homodimer form); each monomer interacts with the C-terminal regions of each NFS1 monomer. Interacts (monomer form) with FXN (via ferrous form); the interaction is possible when both are bound to the dimeric form of the cysteine desulfurase complex (NFS1:LYRM4) and enhances FXN interaction to the dimeric form of the cysteine desulfurase complex (NFS1:LYRM4). Interacts with GLRX5. Interacts (D-state) with HSPA9. Interacts (S-state) with HSCB; this interaction stimulates the ATPase activity of HSPA9. Component of a complex composed of FXN, NFS1, LYRM4 and ISCU. Post-translationally, cysteine persulfide is reduced by thiol-containing molecules such as glutathione and L-cysteine. In terms of processing, phosphorylation at Ser-15 is required for ISCU protein stabilization in the cytosol, whereas dephosphorylation of Ser-15, due to the inhibition of mTORC1 (mammalian target of rapamycin complex 1) complex, leads to degradation of the precursor form and ultimately to a decrease in the mitochondrial mature form.

It localises to the mitochondrion. Functionally, mitochondrial scaffold protein, of the core iron-sulfur cluster (ISC) assembly complex, that provides the structural architecture on which the [2Fe-2S] clusters are assembled. The core iron-sulfur cluster (ISC) assembly complex is involved in the de novo synthesis of a [2Fe-2S] cluster, the first step of the mitochondrial iron-sulfur protein biogenesis. This process is initiated by the cysteine desulfurase complex (NFS1:LYRM4:NDUFAB1) that produces persulfide which is delivered on the scaffold protein ISCU in a FXN-dependent manner. Then this complex is stabilized by FDX2 which provides reducing equivalents to accomplish the [2Fe-2S] cluster assembly. Finally, the [2Fe-2S] cluster is transferred from ISCU to chaperone proteins, including HSCB, HSPA9 and GLRX5. Exists as two slow interchanging conformational states, a structured (S) and disordered (D) form. May modulate NFS1 desulfurase activity in a zinc-dependent manner. Modulates the interaction between FXN and the cysteine desulfurase complex. In Mus musculus (Mouse), this protein is Iron-sulfur cluster assembly enzyme ISCU.